Here is an 86-residue protein sequence, read N- to C-terminus: MKTLLLTLVVVTIVCLDLGYTLTCLICPERYCQKVHTCRGEEKLCVKRFYDEKALGWRAKRGCAATCPEAKPKETVECCSTDKCNK.

The first 21 residues, 1–21 (MKTLLLTLVVVTIVCLDLGYT), serve as a signal peptide directing secretion. 5 cysteine pairs are disulfide-bonded: cysteine 24-cysteine 45, cysteine 27-cysteine 32, cysteine 38-cysteine 63, cysteine 67-cysteine 78, and cysteine 79-cysteine 84.

As to expression, expressed by the venom gland.

The protein localises to the secreted. Its function is as follows. Binds with low affinity to muscular (alpha-1-beta-1-delta-epsilon/CHRNA1-CHRNB1-CHRND-CHRNE) and very low affinity to neuronal (alpha-7/CHRNA7) nicotinic acetylcholine receptor (nAChR). This is Neurotoxin 3FTx-8a from Bungarus fasciatus (Banded krait).